Consider the following 127-residue polypeptide: MTRIKRGSIARRRRTKAHSFASKFREAHARLTRAITQQQIRALFSADRDRDKQKIDFRRLWITRINALIREKGVFHNYSKFINDLYKSQLLLNRKILAQIAISNRNCLYMIANEIIKKVGFESAVII.

Belongs to the bacterial ribosomal protein bL20 family.

It localises to the plastid. Its subcellular location is the chloroplast. Its function is as follows. Binds directly to 23S ribosomal RNA and is necessary for the in vitro assembly process of the 50S ribosomal subunit. It is not involved in the protein synthesizing functions of that subunit. The chain is Large ribosomal subunit protein bL20c from Jasminum nudiflorum (Winter jasmine).